Here is a 484-residue protein sequence, read N- to C-terminus: Aspartyl/glutamyl-tRNA(Asn/Gln) amidotransferase subunit B (484 aa).

Belongs to the GatB/GatE family. GatB subfamily. Heterotrimer of A, B and C subunits.

The enzyme catalyses L-glutamyl-tRNA(Gln) + L-glutamine + ATP + H2O = L-glutaminyl-tRNA(Gln) + L-glutamate + ADP + phosphate + H(+). It carries out the reaction L-aspartyl-tRNA(Asn) + L-glutamine + ATP + H2O = L-asparaginyl-tRNA(Asn) + L-glutamate + ADP + phosphate + 2 H(+). Its function is as follows. Allows the formation of correctly charged Asn-tRNA(Asn) or Gln-tRNA(Gln) through the transamidation of misacylated Asp-tRNA(Asn) or Glu-tRNA(Gln) in organisms which lack either or both of asparaginyl-tRNA or glutaminyl-tRNA synthetases. The reaction takes place in the presence of glutamine and ATP through an activated phospho-Asp-tRNA(Asn) or phospho-Glu-tRNA(Gln). The polypeptide is Aspartyl/glutamyl-tRNA(Asn/Gln) amidotransferase subunit B (Anaeromyxobacter sp. (strain K)).